Here is an 859-residue protein sequence, read N- to C-terminus: Photoactivated adenylate cyclase subunit beta-like protein FB (859 aa).

Residues 56-149 (LRRLMYLSKS…GRMYGDWHMK (94 aa)) form the BLUF 1 domain. The region spanning 205-333 (VVTFIYLVEF…DCINTTSRIA (129 aa)) is the Guanylate cyclase 1 domain. The tract at residues 414–449 (GLPNSQRPPIFDDTPKANRRPRTPGYGGRQRSDSQV) is disordered. A BLUF 2 domain is found at 471–563 (LTTLTYISQA…RVYPSEWTLT (93 aa)). Residues 619–748 (VMLATDICSF…AVSARVMEVE (130 aa)) enclose the Guanylate cyclase 2 domain. The interval 813–859 (AARSGEKPLTEPEAAKPDFRVSPGRVRHGDSGRRSNSAQGKRSIQVR) is disordered. Over residues 815–831 (RSGEKPLTEPEAAKPDF) the composition is skewed to basic and acidic residues. The segment covering 846 to 859 (RSNSAQGKRSIQVR) has biased composition (polar residues).

The protein belongs to the adenylyl cyclase class-4/guanylyl cyclase family. In terms of assembly, heterotetramer of two alpha and two beta subunits.

It is found in the cell projection. The protein localises to the cilium. It localises to the flagellum. The polypeptide is Photoactivated adenylate cyclase subunit beta-like protein FB (Euglena gracilis).